The following is a 247-amino-acid chain: Lysosomal membrane ascorbate-dependent ferrireductase CYB561A3 (247 aa).

At 1-3 (MRG) the chain is on the cytoplasmic side. Residues 4–24 (IVGFYITYLLCLILGIACVVL) traverse the membrane as a helical segment. In terms of domain architecture, Cytochrome b561 spans 13 to 223 (LCLILGIACV…FGLVVLKILS (211 aa)). At 25–46 (VVHWNFMYRDGFAWDGSSKNFN) the chain is on the lumenal side. A helical membrane pass occupies residues 47 to 67 (WHPVLMVTGMLVLYGNAAVVY). Heme b is bound by residues H48 and R68. Residues 68 to 82 (RIPLTWGHNKLPWKL) lie on the Cytoplasmic side of the membrane. K77 and K81 together coordinate L-ascorbate. Residues 83–103 (LHAGLLLLSFIFSVIGLCAVF) form a helical membrane-spanning segment. Residues H84, 113-116 (NLYS), and H118 each bind heme b. Topologically, residues 104–120 (NFHNVHHTANLYSLHSW) are lumenal. A helical transmembrane segment spans residues 121-141 (VGICTAALFTAQWVMGFTSFL). Residues 142–155 (LPCTPMAVRAFVKP) are Cytoplasmic-facing. L-ascorbate is bound at residue R150. A helical membrane pass occupies residues 156–176 (THVWMGAMILVLSIVSCISGI). The heme b site is built by H157 and E178. Residues 177–201 (NEKLFFVLKETTNGTKPYSALPPEA) are Lumenal-facing. An N-linked (GlcNAc...) asparagine glycan is attached at N189. A helical transmembrane segment spans residues 202–222 (VAANSLGVIIVAFGLVVLKIL). The Cytoplasmic segment spans residues 223–247 (SNQMWQRPEPGDDEGVYRPLAYDGS). Q228 contributes to the heme b binding site.

As to quaternary structure, homodimer. Requires heme b as cofactor.

The protein localises to the late endosome membrane. It localises to the lysosome membrane. The catalysed reaction is Fe(3+)(out) + L-ascorbate(in) = monodehydro-L-ascorbate radical(in) + Fe(2+)(out) + H(+). Transmembrane reductase that uses ascorbate as an electron donor in the cytoplasm and transfers electrons across membranes to reduce iron cations Fe(3+) into Fe(2+) in the lumen of the late endosome and lysosome. Reduced iron can then be extruded from the late endosome and lysosome to the cytoplasm by divalent metal-specific transporters. It is therefore most probably involved in endosomal and lysosomal cellular iron homeostasis. The polypeptide is Lysosomal membrane ascorbate-dependent ferrireductase CYB561A3 (cyb561a3a) (Danio rerio (Zebrafish)).